The sequence spans 551 residues: Palmdelphin (551 aa).

Methionine 1 is subject to N-acetylmethionine. A coiled-coil region spans residues 12–106 (QAITDKRKIQ…LQISANEEVI (95 aa)). A Glycyl lysine isopeptide (Lys-Gly) (interchain with G-Cter in SUMO2) cross-link involves residue lysine 125. Serine 135 and serine 163 each carry phosphoserine. A Glycyl lysine isopeptide (Lys-Gly) (interchain with G-Cter in SUMO1); alternate cross-link involves residue lysine 178. A Glycyl lysine isopeptide (Lys-Gly) (interchain with G-Cter in SUMO2); alternate cross-link involves residue lysine 178. Residues 247–258 (ERNSKSPTEYHE) show a composition bias toward basic and acidic residues. The interval 247-267 (ERNSKSPTEYHEPVYANPFCR) is disordered. Threonine 270 bears the Phosphothreonine mark. Disordered stretches follow at residues 298–387 (HESE…CSSP) and 452–536 (EDDE…DPSL). Phosphoserine is present on residues serine 322, serine 350, serine 371, serine 376, serine 385, and serine 386. Basic and acidic residues predominate over residues 484–495 (KRSEVSPHENTN). Serine 498, serine 515, and serine 520 each carry phosphoserine.

Belongs to the paralemmin family. In terms of assembly, interacts with GLUL. Phosphorylated. In terms of tissue distribution, expressed in the brain and the spinal cord. Expressed in the anterior olfactory nucleus, the olfactory tubercle, the nucleus supraopticus, the nucleus of the lateral olfactory tract, the piriform cortex, the cortico-amygdaloid transition zone, the septofimbrial nucleus and the indusium griseum (at protein level).

It localises to the cytoplasm. Its subcellular location is the cell projection. The protein localises to the dendrite. The protein resides in the dendritic spine. The chain is Palmdelphin (Palmd) from Rattus norvegicus (Rat).